Consider the following 528-residue polypeptide: O-methylsterigmatocystin oxidoreductase (528 aa).

Cys-440 serves as a coordination point for heme.

It belongs to the cytochrome P450 family. Heme is required as a cofactor.

The enzyme catalyses 8-O-methylsterigmatocystin + 2 reduced [NADPH--hemoprotein reductase] + 2 O2 = aflatoxin B1 + methanol + 2 oxidized [NADPH--hemoprotein reductase] + CO2 + H2O + 2 H(+). It carries out the reaction 8-O-methyldihydrosterigmatocystin + 2 reduced [NADPH--hemoprotein reductase] + 2 O2 = aflatoxin B2 + methanol + 2 oxidized [NADPH--hemoprotein reductase] + CO2 + H2O + 2 H(+). It functions in the pathway mycotoxin biosynthesis; aflatoxin biosynthesis. Converts O-methylsterigmatocystin (OMST) to aflatoxin B1 and converts dihydro-O-methylsterigmatocystin (DHOMST) to aflatoxin B2 in the aflatoxin biosynthesis pathway. This chain is O-methylsterigmatocystin oxidoreductase (ordA), found in Aspergillus flavus.